The chain runs to 261 residues: uncharacterized protein (261 aa).

Positions 1–22 (MIHSKKLTLGICLVLLIILIGG) are cleaved as a signal peptide. C23 carries the N-palmitoyl cysteine lipid modification. Residue C23 is the site of S-diacylglycerol cysteine attachment.

This sequence belongs to the staphylococcal tandem lipoprotein family.

It is found in the cell membrane. This is an uncharacterized protein from Staphylococcus aureus (strain NCTC 8325 / PS 47).